The primary structure comprises 1121 residues: Transcription factor CSR2 (1121 aa).

Phosphoserine occurs at positions 23, 46, and 127. 4 disordered regions span residues 273-342 (PLHT…RSLP), 513-532 (HTQLVASRPRSSSISSPQKL), 579-600 (LKRNNSNGRSDNNGASSSGLAM), and 837-860 (IPQDKNHNEVNDTNGNSNTSLQTS). Positions 276–310 (TQRTSPSNTARTGNAMDTSNSDRASPASNNNTTDA) are enriched in polar residues. Low complexity-rich tracts occupy residues 318–329 (NNNPMNNNNSPA), 519–529 (SRPRSSSISSP), and 582–597 (NNSNGRSDNNGASSSG). Serine 327 carries the post-translational modification Phosphoserine. The segment covering 837–846 (IPQDKNHNEV) has biased composition (basic and acidic residues). Residue lysine 841 forms a Glycyl lysine isopeptide (Lys-Gly) (interchain with G-Cter in ubiquitin) linkage. A compositionally biased stretch (polar residues) spans 847 to 860 (NDTNGNSNTSLQTS). A Phosphoserine modification is found at serine 987. Positions 999–1009 (KTTAVSDSSNG) are enriched in polar residues. Disordered regions lie at residues 999-1022 (KTTAVSDSSNGAPIRDQQEQQARP) and 1075-1121 (TPRY…EISS). Over residues 1084–1093 (TNTDYNYNDN) the composition is skewed to low complexity.

This sequence belongs to the CSR2 family. Post-translationally, phosphorylated by CDC28.

The protein resides in the cytoplasm. Its subcellular location is the nucleus. Transcription factor involved in the regulation of fermentation and aerobic oxidation. Acts as a repressor of CYC1, which is involved in electron flow through the mitochondria under aerobic condition. Required for pseudohyphal formation upon nitrogen starvation. May be involved in viability at stationary phase and aging. This chain is Transcription factor CSR2 (CSR2), found in Saccharomyces cerevisiae (strain ATCC 204508 / S288c) (Baker's yeast).